A 255-amino-acid chain; its full sequence is MRSDGRKEDQLRPVSIQRDFLEYPEGSCLISFGKTKVICTASVIENVPNWLKGKGQGWITAEYSMLPRATQQRTIRESVQGRIGGRTHEIQRMIGRAMRTAVELTKIGERTIWVDCDVIQADGGTRTAAITGAFVAVADAIIKLHKEGIIEETPIKDFVAAVSVGIVNDRILLDLNFEEDSAAQVDMNVVGTGSGRLSEVHTMGEEYSFTKDELIKMLDLAQKGINELIELQKKLYVIQDGKWERSELKEVSSTT.

Phosphate-binding positions include arginine 86 and 124–126; that span reads GTR.

Belongs to the RNase PH family. As to quaternary structure, homohexameric ring arranged as a trimer of dimers.

It catalyses the reaction tRNA(n+1) + phosphate = tRNA(n) + a ribonucleoside 5'-diphosphate. Phosphorolytic 3'-5' exoribonuclease that plays an important role in tRNA 3'-end maturation. Removes nucleotide residues following the 3'-CCA terminus of tRNAs; can also add nucleotides to the ends of RNA molecules by using nucleoside diphosphates as substrates, but this may not be physiologically important. Probably plays a role in initiation of 16S rRNA degradation (leading to ribosome degradation) during starvation. In Aquifex aeolicus (strain VF5), this protein is Ribonuclease PH.